We begin with the raw amino-acid sequence, 546 residues long: MESNNGEAKIQKVKNWSPVWIFPIVTALIGAWVLFYHYSHQGPEVTLITANAEGIEGGKTTIKSRSVDVGVVESATLADDLTHVEIKARLNSGMEKLLHKDTVFWVVKPQIGREGISGLGTLLSGVYIELQPGAKGSKMDKYDLLDSPPLAPPDAKGIRVILDSKKAGQLSPGDPVLFRGYRVGSVETSTFDTQKRNISYQLFINAPYDRLVTNNVRFWKDSGIAVDLTSAGMRVEMGSLTTLLSGGVSFDVPEGLDLGQPVAPKTAFVLYDDQKSIQDSLYTDHIDYLMFFKDSVRGLQPGAPVEFRGIRLGTVSKVPFFAPNMRQTFNDDYRIPVLIRIEPERLKMQLGENADVVEHLGELLKRGLRGSLKTGNLVTGALYVDLDFYPNTPAITGIREFNGYQIIPTVSGGLAQIQQRLMEALDKINKLPLNPMIEQATSTLSESQRTMKNLQTTLDSMNKILASQSMQQLPTDMQSTLRELNRSMQGFQPGSAAYNKMVADMQRLDQVLRELQPVLKTLNEKSNALVFEAKDKKDPEPKRAKQ.

At 1 to 15 the chain is on the cytoplasmic side; that stretch reads MESNNGEAKIQKVKN. The helical transmembrane segment at 16 to 36 threads the bilayer; that stretch reads WSPVWIFPIVTALIGAWVLFY. Over 37-546 the chain is Periplasmic; sequence HYSHQGPEVT…KDPEPKRAKQ (510 aa). 3 MCE/MlaD regions span residues 42 to 133, 158 to 217, and 285 to 389; these read GPEV…LQPG, IRVI…NNVR, and HIDY…LDFY. Residues 437 to 464 adopt a coiled-coil conformation; sequence IEQATSTLSESQRTMKNLQTTLDSMNKI.

It belongs to the PqiB family. As to quaternary structure, homohexamer. May form a complex composed of PqiA, PqiB and PqiC. Interacts with PqiC.

The protein localises to the cell inner membrane. Forms a tunnel that spans the entire periplasmic space. Could be implicated in lipid transport between the inner membrane and the outer membrane. Binds phospholipids. Required for outer membrane homeostasis. Contributes to membrane integrity. In Escherichia coli (strain K12), this protein is Intermembrane transport protein PqiB.